The primary structure comprises 260 residues: Imidazole glycerol phosphate synthase subunit HisF (260 aa).

Residues D11 and D130 contribute to the active site.

Belongs to the HisA/HisF family. As to quaternary structure, heterodimer of HisH and HisF.

The protein resides in the cytoplasm. The catalysed reaction is 5-[(5-phospho-1-deoxy-D-ribulos-1-ylimino)methylamino]-1-(5-phospho-beta-D-ribosyl)imidazole-4-carboxamide + L-glutamine = D-erythro-1-(imidazol-4-yl)glycerol 3-phosphate + 5-amino-1-(5-phospho-beta-D-ribosyl)imidazole-4-carboxamide + L-glutamate + H(+). It participates in amino-acid biosynthesis; L-histidine biosynthesis; L-histidine from 5-phospho-alpha-D-ribose 1-diphosphate: step 5/9. IGPS catalyzes the conversion of PRFAR and glutamine to IGP, AICAR and glutamate. The HisF subunit catalyzes the cyclization activity that produces IGP and AICAR from PRFAR using the ammonia provided by the HisH subunit. The sequence is that of Imidazole glycerol phosphate synthase subunit HisF from Psychrobacter arcticus (strain DSM 17307 / VKM B-2377 / 273-4).